Consider the following 157-residue polypeptide: S-ribosylhomocysteine lyase (157 aa).

Fe cation contacts are provided by H54, H58, and C126.

It belongs to the LuxS family. In terms of assembly, homodimer. Fe cation serves as cofactor.

It carries out the reaction S-(5-deoxy-D-ribos-5-yl)-L-homocysteine = (S)-4,5-dihydroxypentane-2,3-dione + L-homocysteine. Involved in the synthesis of autoinducer 2 (AI-2) which is secreted by bacteria and is used to communicate both the cell density and the metabolic potential of the environment. The regulation of gene expression in response to changes in cell density is called quorum sensing. Catalyzes the transformation of S-ribosylhomocysteine (RHC) to homocysteine (HC) and 4,5-dihydroxy-2,3-pentadione (DPD). This Bacillus anthracis (strain A0248) protein is S-ribosylhomocysteine lyase.